Reading from the N-terminus, the 567-residue chain is PHD finger protein 1 (567 aa).

Residues 1–31 are disordered; that stretch reads MAQPPRLSRSGASSLWDPASPAPTSGPRPRL. The Tudor domain occupies 29 to 86; it reads PRLWEGQDVLARWTDGLLYLGTIKKVDSAREVCLVQFEDDSQFLVLWKDISPAALPGE. 2 consecutive PHD-type zinc fingers follow at residues 87–142 and 186–240; these read ELLC…CVFA and QSYC…CRGG. Disordered regions lie at residues 333–441 and 455–537; these read ARMP…TDAR and HPSA…GYLS. A Phosphoserine modification is found at Gly-360. Basic and acidic residues predominate over residues 371-386; the sequence is PEPEPLRRRQKGKVEE. A Phosphoserine modification is found at Ser-420. Low complexity-rich tracts occupy residues 423–433, 456–470, and 488–510; these read PNQSYQGSSGY, PSAS…SGPP, and SAPH…LPRR. The segment covering 524–534 has biased composition (gly residues); that stretch reads GTGGGVRGGVG.

The protein belongs to the Polycomblike family. Interacts with CHMP1. Associated component of the PRC2 complex. Interacts with p53/TP53. Highest levels in heart, skeletal muscle, and pancreas, lower levels in brain, placenta, lung, liver and kidney.

It is found in the nucleus. The protein resides in the cytoplasm. It localises to the cytoskeleton. The protein localises to the microtubule organizing center. Its subcellular location is the centrosome. Its function is as follows. Polycomb group (PcG) that specifically binds histone H3 trimethylated at 'Lys-36' (H3K36me3) and recruits the PRC2 complex. Involved in DNA damage response and is recruited at double-strand breaks (DSBs). Acts by binding to H3K36me3, a mark for transcriptional activation, and recruiting the PRC2 complex: it is however unclear whether recruitment of the PRC2 complex to H3K36me3 leads to enhance or inhibit H3K27me3 methylation mediated by the PRC2 complex. According to some reports, PRC2 recruitment by PHF1 promotes H3K27me3 and subsequent gene silencing by inducing spreading of PRC2 and H3K27me3 into H3K36me3 loci. According to another report, PHF1 recruits the PRC2 complex at double-strand breaks (DSBs) and inhibits the activity of PRC2. Regulates p53/TP53 stability and prolonges its turnover: may act by specifically binding to a methylated from of p53/TP53. In Homo sapiens (Human), this protein is PHD finger protein 1 (PHF1).